We begin with the raw amino-acid sequence, 178 residues long: Crossover junction endodeoxyribonuclease RuvC (178 aa).

Catalysis depends on residues Asp-8, Glu-72, and Asp-144. The Mg(2+) site is built by Asp-8, Glu-72, and Asp-144.

It belongs to the RuvC family. In terms of assembly, homodimer which binds Holliday junction (HJ) DNA. The HJ becomes 2-fold symmetrical on binding to RuvC with unstacked arms; it has a different conformation from HJ DNA in complex with RuvA. In the full resolvosome a probable DNA-RuvA(4)-RuvB(12)-RuvC(2) complex forms which resolves the HJ. The cofactor is Mg(2+).

Its subcellular location is the cytoplasm. It catalyses the reaction Endonucleolytic cleavage at a junction such as a reciprocal single-stranded crossover between two homologous DNA duplexes (Holliday junction).. Functionally, the RuvA-RuvB-RuvC complex processes Holliday junction (HJ) DNA during genetic recombination and DNA repair. Endonuclease that resolves HJ intermediates. Cleaves cruciform DNA by making single-stranded nicks across the HJ at symmetrical positions within the homologous arms, yielding a 5'-phosphate and a 3'-hydroxyl group; requires a central core of homology in the junction. The consensus cleavage sequence is 5'-(A/T)TT(C/G)-3'. Cleavage occurs on the 3'-side of the TT dinucleotide at the point of strand exchange. HJ branch migration catalyzed by RuvA-RuvB allows RuvC to scan DNA until it finds its consensus sequence, where it cleaves and resolves the cruciform DNA. This chain is Crossover junction endodeoxyribonuclease RuvC, found in Idiomarina loihiensis (strain ATCC BAA-735 / DSM 15497 / L2-TR).